The primary structure comprises 159 residues: Putative ribosomal RNA large subunit methyltransferase H (159 aa).

Residues Leu-76, Gly-108, and 127 to 132 each bind S-adenosyl-L-methionine; that span reads FSKMTF.

It belongs to the RNA methyltransferase RlmH family.

The protein localises to the cytoplasm. It catalyses the reaction pseudouridine(1915) in 23S rRNA + S-adenosyl-L-methionine = N(3)-methylpseudouridine(1915) in 23S rRNA + S-adenosyl-L-homocysteine + H(+). Specifically methylates the pseudouridine at position 1915 (m3Psi1915) in 23S rRNA. In Methanococcus maripaludis (strain C6 / ATCC BAA-1332), this protein is Putative ribosomal RNA large subunit methyltransferase H.